Here is a 104-residue protein sequence, read N- to C-terminus: Large ribosomal subunit protein uL24 (104 aa).

This sequence belongs to the universal ribosomal protein uL24 family. In terms of assembly, part of the 50S ribosomal subunit.

Functionally, one of two assembly initiator proteins, it binds directly to the 5'-end of the 23S rRNA, where it nucleates assembly of the 50S subunit. One of the proteins that surrounds the polypeptide exit tunnel on the outside of the subunit. The polypeptide is Large ribosomal subunit protein uL24 (Salmonella paratyphi A (strain ATCC 9150 / SARB42)).